A 61-amino-acid polypeptide reads, in one-letter code: Small ribosomal subunit protein uS14 (61 aa).

4 residues coordinate Zn(2+): cysteine 24, cysteine 27, cysteine 40, and cysteine 43.

Belongs to the universal ribosomal protein uS14 family. Zinc-binding uS14 subfamily. In terms of assembly, part of the 30S ribosomal subunit. Contacts proteins S3 and S10. Zn(2+) is required as a cofactor.

In terms of biological role, binds 16S rRNA, required for the assembly of 30S particles and may also be responsible for determining the conformation of the 16S rRNA at the A site. The sequence is that of Small ribosomal subunit protein uS14 from Rhodopirellula baltica (strain DSM 10527 / NCIMB 13988 / SH1).